The following is an 849-amino-acid chain: Trehalose-phosphatase (849 aa).

The interval 1 to 558 is glycosyltransferase; that stretch reads MPSGAQGNTQ…VKALESHMTT (558 aa).

The protein in the N-terminal section; belongs to the glycosyltransferase 20 family. This sequence in the C-terminal section; belongs to the trehalose phosphatase family. The cofactor is Mg(2+).

The protein localises to the cytoplasm. Its subcellular location is the nucleus. It catalyses the reaction alpha,alpha-trehalose 6-phosphate + H2O = alpha,alpha-trehalose + phosphate. It functions in the pathway carbohydrate biosynthesis. Its function is as follows. Phosphatase catalytic subunit of the trehalose synthase complex that catalyzes the production of trehalose from glucose-6-phosphate and UDP-glucose in a two step process. This chain is Trehalose-phosphatase (tps2), found in Schizosaccharomyces pombe (strain 972 / ATCC 24843) (Fission yeast).